We begin with the raw amino-acid sequence, 416 residues long: MSRRYLFTSESVTEGHPDKICDQISDTIIDTLLYHDDQSRVAAEVVVNTGLVLITGEVTSKANVNFVELARKKIAEIGYTNADNGFSANSCAVLVALDEQSPDIAQGVTQAHEQRQALSDDELDQIGAGDQGIMFGYACNETPELMPLPISLAHRFSRRLAAVRKTGDLGYLRPDGKTQVSIVYEDGIPVGIDTILISTQHDETIDSITDNDGVQAKIKSDLWDAVVLPVLDNIGIKPSQETRFLVNPTGKFVIGGPQGDAGLTGRKIIVDTYGGYSRHGGGAFSGKDPTKVDRSAAYACRYVAKNIVAAGLAEKCEVQLSYAIGVARPVSILVETFGTGKVDENKLLDAVKELFELRPAGIIQALNLRQLPSQRGGRFYQDVAAYGHFGRNDLDLPWEATDKAALLKEALLKVGV.

Residue histidine 16 coordinates ATP. A Mg(2+)-binding site is contributed by aspartate 18. Glutamate 44 lines the K(+) pocket. L-methionine-binding residues include glutamate 57 and glutamine 100. The flexible loop stretch occupies residues 100–110 (QSPDIAQGVTQ). ATP-binding positions include 175-177 (DGK), 251-252 (KF), aspartate 260, 266-267 (RK), alanine 283, and lysine 287. Aspartate 260 contacts L-methionine. Lysine 291 is an L-methionine binding site.

Belongs to the AdoMet synthase family. As to quaternary structure, homotetramer; dimer of dimers. The cofactor is Mg(2+). K(+) is required as a cofactor.

The protein localises to the cytoplasm. It catalyses the reaction L-methionine + ATP + H2O = S-adenosyl-L-methionine + phosphate + diphosphate. Its pathway is amino-acid biosynthesis; S-adenosyl-L-methionine biosynthesis; S-adenosyl-L-methionine from L-methionine: step 1/1. Functionally, catalyzes the formation of S-adenosylmethionine (AdoMet) from methionine and ATP. The overall synthetic reaction is composed of two sequential steps, AdoMet formation and the subsequent tripolyphosphate hydrolysis which occurs prior to release of AdoMet from the enzyme. This is S-adenosylmethionine synthase from Crocosphaera subtropica (strain ATCC 51142 / BH68) (Cyanothece sp. (strain ATCC 51142)).